The primary structure comprises 287 residues: Formamidopyrimidine-DNA glycosylase (287 aa).

The Schiff-base intermediate with DNA role is filled by Pro-2. Glu-3 functions as the Proton donor in the catalytic mechanism. Lys-58 functions as the Proton donor; for beta-elimination activity in the catalytic mechanism. 3 residues coordinate DNA: His-104, Arg-123, and Arg-166. An FPG-type zinc finger spans residues 251–287; it reads RVYDREGEPCPTPACKGVIAREVQAGRSTFFCPVCQV. The active-site Proton donor; for delta-elimination activity is Arg-277.

Belongs to the FPG family. As to quaternary structure, monomer. It depends on Zn(2+) as a cofactor.

The catalysed reaction is Hydrolysis of DNA containing ring-opened 7-methylguanine residues, releasing 2,6-diamino-4-hydroxy-5-(N-methyl)formamidopyrimidine.. It catalyses the reaction 2'-deoxyribonucleotide-(2'-deoxyribose 5'-phosphate)-2'-deoxyribonucleotide-DNA = a 3'-end 2'-deoxyribonucleotide-(2,3-dehydro-2,3-deoxyribose 5'-phosphate)-DNA + a 5'-end 5'-phospho-2'-deoxyribonucleoside-DNA + H(+). Functionally, involved in base excision repair of DNA damaged by oxidation or by mutagenic agents. Acts as a DNA glycosylase that recognizes and removes damaged bases. Has a preference for oxidized purines, such as 7,8-dihydro-8-oxoguanine (8-oxoG). Has AP (apurinic/apyrimidinic) lyase activity and introduces nicks in the DNA strand. Cleaves the DNA backbone by beta-delta elimination to generate a single-strand break at the site of the removed base with both 3'- and 5'-phosphates. The chain is Formamidopyrimidine-DNA glycosylase from Caulobacter vibrioides (strain ATCC 19089 / CIP 103742 / CB 15) (Caulobacter crescentus).